A 156-amino-acid polypeptide reads, in one-letter code: Ribosomally synthesized cyclic peptide victorin precursosr vicA1 (156 aa).

The N-terminal stretch at 1 to 21 (MVRITALMSGSILLFALQALA) is a signal peptide. 7 propeptides span residues 22–36 (MPVE…AEKR), 43–55 (KRGE…EEKR), 62–74 (KRGE…EEKR), 81–93 (KRGE…EEKR), 100–112 (KRGE…EEKR), 119–131 (KRGE…EEKR), and 138–150 (KRGE…EEKR).

In terms of processing, vicA1 is processed by several endopeptidases including kexin proteases as well as the cluster-specific peptidases vicP1 and vicP2 to produce 7 identical copies of the hexapeptide Gly-Leu-Lys-Leu-Ala-Phe, that are further modified to yield victorins. After being excised from the precursor peptide, the core peptides are cyclized and modified post-translationally by enzymes encoded within the gene cluster. The ustYa family protein vicYb is required for the formation of the macrocycle in victorin and the copper amine oxidases (CAOs) vicK1 and vicK2 are responsible for converting victorin to the active form by oxidizing the N-terminal glycyl residue in the peptides to glyoxylate. Relaxed substrate specificity of enzymes in the victorin biosynthetic pathway results in a metabolic grid that produces a set of analogs including victorinines B, C, E or HV-toxin M.

The protein operates within mycotoxin biosynthesis. Ribosomally synthesized cyclic peptide victorin precursor, part of the gene cluster that mediates the biosynthesis of the secondary metabolite victorin, the molecular basis for Victoria blight of oats. The vicA1 translated product contains a 7-fold repeated peptide embedding the hexapeptide Gly-Leu-Lys-Leu-Ala-Phe, that is converted into the cyclic victorin. The protein is Ribosomally synthesized cyclic peptide victorin precursosr vicA1 of Bipolaris victoriae (strain FI3) (Victoria blight of oats agent).